Here is a 127-residue protein sequence, read N- to C-terminus: MARVAGVDLPRNKQARIALTYIYGIGNPRALRILTAANVDPFRKIQDLSEDEVNRIRQVIEAEGQVEGDLRKDVAMHIKRLIEIQSYRGLRHRRSLPVRGQRTHTNARTRKGPRRGTVAGKKKATKT.

The interval 93–127 (RRSLPVRGQRTHTNARTRKGPRRGTVAGKKKATKT) is disordered.

It belongs to the universal ribosomal protein uS13 family. Part of the 30S ribosomal subunit. Forms a loose heterodimer with protein S19. Forms two bridges to the 50S subunit in the 70S ribosome.

In terms of biological role, located at the top of the head of the 30S subunit, it contacts several helices of the 16S rRNA. In the 70S ribosome it contacts the 23S rRNA (bridge B1a) and protein L5 of the 50S subunit (bridge B1b), connecting the 2 subunits; these bridges are implicated in subunit movement. Contacts the tRNAs in the A and P-sites. This Acidobacterium capsulatum (strain ATCC 51196 / DSM 11244 / BCRC 80197 / JCM 7670 / NBRC 15755 / NCIMB 13165 / 161) protein is Small ribosomal subunit protein uS13.